Reading from the N-terminus, the 88-residue chain is Small ribosomal subunit protein bS20 (88 aa).

The interval Met-1–Met-27 is disordered.

The protein belongs to the bacterial ribosomal protein bS20 family.

In terms of biological role, binds directly to 16S ribosomal RNA. This chain is Small ribosomal subunit protein bS20, found in Shewanella woodyi (strain ATCC 51908 / MS32).